An 834-amino-acid chain; its full sequence is Ras GTPase-activating protein 3 (834 aa).

2 C2 domains span residues 1-112 and 123-263; these read MAVE…DTWF and VQGK…EAWY. A2 is subject to N-acetylalanine. Y66 is subject to Phosphotyrosine. S77 is subject to Phosphoserine. T110 is subject to Phosphothreonine. The region spanning 346–561 is the Ras-GAP domain; sequence GRVVPFISAI…DAVKNFLDLI (216 aa). Residues 576–677 form the PH domain; the sequence is ILLKEGFMIK…WIDILTKVSQ (102 aa). The segment at 679–715 adopts a Btk-type zinc-finger fold; it reads NQKRLTVFHPSAYLNGHWLCCRASSDTAIGCTPCTGG. Positions 687, 698, 699, and 709 each coordinate Zn(2+). A phosphoserine mark is found at S809 and S833.

In terms of biological role, inhibitory regulator of the Ras-cyclic AMP pathway. Binds inositol tetrakisphosphate (IP4). This chain is Ras GTPase-activating protein 3 (Rasa3), found in Rattus norvegicus (Rat).